We begin with the raw amino-acid sequence, 335 residues long: Phosphatidylcholine:ceramide cholinephosphotransferase 2 (335 aa).

The next 5 membrane-spanning stretches (helical) occupy residues 60–80 (LTAFLCLMLSAFLNFFLLTVI), 104–124 (WSVGDVLSTVSSVVAFTIIFL), 136–156 (FLLGAIMYGLRAVILGVTFLP), 200–220 (ILCGDLMFSGHTVVLTIMYFV), and 229–249 (LVILRYIAAPITFLGIAALVV). The active site involves H210. Active-site residues include H253 and D257. The helical transmembrane segment at 258-278 (VLIAYWLTSHVFWSYHQIFEM) threads the bilayer. The Cytoplasmic portion of the chain corresponds to 279–335 (RKDDRPQAPLSRLWWFWLCYWFESDVADGKLVNKWNWPLEGPQRMHTIMNRINYKLQ).

This sequence belongs to the sphingomyelin synthase family.

The protein resides in the membrane. It catalyses the reaction an N-acylsphing-4-enine + a 1,2-diacyl-sn-glycero-3-phosphocholine = a sphingomyelin + a 1,2-diacyl-sn-glycerol. The enzyme catalyses an N-acyl-15-methylhexadecasphing-4-enine + a 1,2-diacyl-sn-glycero-3-phosphocholine = an N-acyl-15-methylhexadecasphing-4-enine-1-phosphocholine + a 1,2-diacyl-sn-glycerol. It participates in lipid metabolism; sphingolipid metabolism. In terms of biological role, sphingomyelin synthases (SM synthase or SMS) synthesize the sphingolipid sphingomyelin (SM) through transfer of the phosphatidyl head group of 1,2-diacyl-sn-glycero-3-phosphocholine (phosphatidylcholine, PC) on to the primary hydroxyl of ceramide (N-acylsphingoid base), yielding 1,2-diacyl-sn-glycerol (diacylglycerol, DAG) as a side product. Functions as a bidirectional lipid cholinephosphotransferases capable of converting PC and ceramide to SM and DAG and vice versa depending on the respective levels of ceramide and DAG as phosphocholine acceptors, respectively. The sequence is that of Phosphatidylcholine:ceramide cholinephosphotransferase 2 (sms-2) from Caenorhabditis elegans.